A 162-amino-acid chain; its full sequence is Phospholipase A and acyltransferase 3 (162 aa).

Residues Met1 to Val133 are Cytoplasmic-facing. The 117-residue stretch at Leu13–Gln129 folds into the LRAT domain. Catalysis depends on residues His23 and His35. Catalysis depends on Cys113, which acts as the Acyl-thioester intermediate. The helical transmembrane segment at Ile134 to Phe154 threads the bilayer. The Lumenal segment spans residues Ser155 to Gln162.

It belongs to the H-rev107 family. As to quaternary structure, interacts with PPP2R1A; this interaction might decrease PP2A activity.

It localises to the cell membrane. The protein resides in the cytoplasm. The protein localises to the cytosol. It is found in the perinuclear region. Its subcellular location is the peroxisome membrane. It localises to the mitochondrion membrane. The protein resides in the nucleus envelope. The protein localises to the lysosome membrane. It is found in the endoplasmic reticulum membrane. The enzyme catalyses a 1,2-diacyl-sn-glycero-3-phosphocholine + H2O = a 1-acyl-sn-glycero-3-phosphocholine + a fatty acid + H(+). It carries out the reaction a 1,2-diacyl-sn-glycero-3-phosphocholine + H2O = a 2-acyl-sn-glycero-3-phosphocholine + a fatty acid + H(+). It catalyses the reaction 1,2-dihexadecanoyl-sn-glycero-3-phosphocholine + H2O = 1-hexadecanoyl-sn-glycero-3-phosphocholine + hexadecanoate + H(+). The catalysed reaction is 1,2-dihexadecanoyl-sn-glycero-3-phosphocholine + H2O = 2-hexadecanoyl-sn-glycero-3-phosphocholine + hexadecanoate + H(+). The enzyme catalyses 1-hexadecanoyl-2-(9Z-octadecenoyl)-sn-glycero-3-phosphocholine + H2O = 2-(9Z-octadecenoyl)-sn-glycero-3-phosphocholine + hexadecanoate + H(+). It carries out the reaction 1-hexadecanoyl-2-(9Z-octadecenoyl)-sn-glycero-3-phosphocholine + H2O = 1-hexadecanoyl-sn-glycero-3-phosphocholine + (9Z)-octadecenoate + H(+). It catalyses the reaction 1-hexadecanoyl-2-(5Z,8Z,11Z,14Z-eicosatetraenoyl)-sn-glycero-3-phosphocholine + H2O = 1-hexadecanoyl-sn-glycero-3-phosphocholine + (5Z,8Z,11Z,14Z)-eicosatetraenoate + H(+). The catalysed reaction is 1-hexadecanoyl-2-(5Z,8Z,11Z,14Z-eicosatetraenoyl)-sn-glycero-3-phosphocholine + H2O = 2-(5Z,8Z,11Z,14Z)-eicosatetraenoyl-sn-glycero-3-phosphocholine + hexadecanoate + H(+). The enzyme catalyses 1-hexadecanoyl-2-(9Z,12Z-octadecadienoyl)-sn-glycero-3-phosphoethanolamine + H2O = 1-hexadecanoyl-sn-glycero-3-phosphoethanolamine + (9Z,12Z)-octadecadienoate + H(+). It carries out the reaction 1-hexadecanoyl-2-(9Z,12Z-octadecadienoyl)-sn-glycero-3-phosphoethanolamine + H2O = 2-(9Z,12Z)-octadecadienoyl-sn-glycero-3-phosphoethanolamine + hexadecanoate + H(+). It catalyses the reaction 1-hexadecanoyl-2-(5Z,8Z,11Z,14Z-eicosatetraenoyl)-sn-glycero-3-phosphoethanolamine + H2O = 1-hexadecanoyl-sn-glycero-3-phosphoethanolamine + (5Z,8Z,11Z,14Z)-eicosatetraenoate + H(+). The catalysed reaction is 1-hexadecanoyl-2-(5Z,8Z,11Z,14Z-eicosatetraenoyl)-sn-glycero-3-phosphoethanolamine + H2O = 2-(5Z,8Z,11Z,14Z)-eicosatetraenoyl-sn-glycero-3-phosphoethanolamine + hexadecanoate + H(+). The enzyme catalyses 1-hexanoyl-2-acyl-sn-glycero-3-phosphocholine + H2O = hexanoate + a 2-acyl-sn-glycero-3-phosphocholine + H(+). It carries out the reaction 1-hexanoyl-2-acyl-sn-glycero-3-phosphocholine + H2O = 1-hexanoyl-sn-glycero-3-phosphocholine + a fatty acid + H(+). It catalyses the reaction 1,2-diheptadecanoyl-sn-glycero-3-phosphoethanolamine + 1-(9Z-octadecenoyl)-2-hexadecanoyl-sn-glycero-3-phosphocholine = 1,2-diheptadecanoyl-sn-glycero-3-phospho-N-hexadecanoyl-ethanolamine + 1-(9Z-octadecenoyl)-sn-glycero-3-phosphocholine + H(+). The catalysed reaction is 1,2-diheptadecanoyl-sn-glycero-3-phosphoethanolamine + 1-(9Z-octadecenoyl)-2-hexadecanoyl-sn-glycero-3-phosphocholine = 1,2-diheptadecanoyl-sn-glycero-3-phospho-N-(9Z-octadecenoyl)-ethanolamine + 2-hexadecanoyl-sn-glycero-3-phosphocholine + H(+). The enzyme catalyses 1,2-dihexanoyl-sn-glycero-3-phosphoethanolamine + 2-heptanoyl-sn-glycero-3-phosphocholine = hexanoyl-sn-glycero-3-phosphoethanolamine + 1-hexanoyl-2-heptanoyl-sn-glycero-3-phosphocholine. It carries out the reaction 1-hexadecanoyl-2-octadecanoyl-sn-glycero-3-phosphocholine + H2O = octadecanoate + 1-hexadecanoyl-sn-glycero-3-phosphocholine + H(+). It catalyses the reaction 1-hexadecanoyl-2-octadecanoyl-sn-glycero-3-phosphocholine + H2O = 2-octadecanoyl-sn-glycero-3-phosphocholine + hexadecanoate + H(+). The catalysed reaction is 1-octadecanoyl-2-hexadecanoyl-sn-glycero-3-phosphocholine + H2O = 1-octadecanoyl-sn-glycero-3-phosphocholine + hexadecanoate + H(+). The enzyme catalyses 1-octadecanoyl-2-hexadecanoyl-sn-glycero-3-phosphocholine + H2O = 2-hexadecanoyl-sn-glycero-3-phosphocholine + octadecanoate + H(+). It carries out the reaction 1-hexadecanoyl-2-(9Z,12Z-octadecadienoyl)-sn-glycero-3-phosphocholine + H2O = (9Z,12Z)-octadecadienoate + 1-hexadecanoyl-sn-glycero-3-phosphocholine + H(+). It catalyses the reaction 1-hexadecanoyl-2-(9Z,12Z-octadecadienoyl)-sn-glycero-3-phosphocholine + H2O = 2-(9Z,12Z-octadecadienoyl)-sn-glycero-3-phosphocholine + hexadecanoate + H(+). The catalysed reaction is 1,2-di-(9Z-octadecenoyl)-sn-glycero-3-phosphocholine + H2O = 2-(9Z-octadecenoyl)-sn-glycero-3-phosphocholine + (9Z)-octadecenoate + H(+). The enzyme catalyses 1,2-dihexadecanoyl-sn-glycero-3-phosphocholine + H2O = hexadecanoyl-sn-glycero-3-phosphocholine + hexadecanoate + H(+). It carries out the reaction 1,2-di-(9Z-octadecenoyl)-sn-glycero-3-phosphocholine + H2O = 1-(9Z-octadecenoyl)-sn-glycero-3-phosphocholine + (9Z)-octadecenoate + H(+). It catalyses the reaction 1,2-di-(9Z-octadecenoyl)-sn-glycero-3-phosphoethanolamine + 1,2-dihexadecanoyl-sn-glycero-3-phosphocholine = hexadecanoyl-sn-glycero-3-phosphocholine + N-hexadecanoyl-1,2-di-(9Z-octadecenoyl)-sn-glycero-3-phosphoethanolamine + H(+). The catalysed reaction is 1,2-di-(9Z,12Z-octadecadienoyl)-sn-glycero-3-phosphocholine + H2O = 1-(9Z,12Z)-octadecadienoyl-sn-glycero-3-phosphocholine + (9Z,12Z)-octadecadienoate + H(+). Its function is as follows. Exhibits both phospholipase A1/2 and acyltransferase activities. Shows phospholipase A1 (PLA1) and A2 (PLA2), catalyzing the calcium-independent release of fatty acids from the sn-1 or sn-2 position of glycerophospholipids. For most substrates, PLA1 activity is much higher than PLA2 activity. Shows O-acyltransferase activity, catalyzing the transfer of a fatty acyl group from glycerophospholipid to the hydroxyl group of lysophospholipid. Shows N-acyltransferase activity, catalyzing the calcium-independent transfer of a fatty acyl group at the sn-1 position of phosphatidylcholine (PC) and other glycerophospholipids to the primary amine of phosphatidylethanolamine (PE), forming N-acylphosphatidylethanolamine (NAPE), which serves as precursor for N-acylethanolamines (NAEs). Exhibits high N-acyltransferase activity and low phospholipase A1/2 activity. Required for complete organelle rupture and degradation that occur during eye lens terminal differentiation, when fiber cells that compose the lens degrade all membrane-bound organelles in order to provide lens with transparency to allow the passage of light. Organelle membrane degradation is probably catalyzed by the phospholipase activity. Plays a role in phospholipid metabolism and adipogenesis. In Pongo abelii (Sumatran orangutan), this protein is Phospholipase A and acyltransferase 3.